Consider the following 1487-residue polypeptide: Adhesion G protein-coupled receptor L2 (1487 aa).

The signal sequence occupies residues 1-25 (MVSSGCRMRSLWFIIIISFSPSTEG). Over 26–855 (FSRAALPFGL…VHHLLLTVIT (830 aa)) the chain is Extracellular. In terms of domain architecture, SUEL-type lectin spans 41 to 130 (SCEGYSIDLR…KYLEVQYECV (90 aa)). N-linked (GlcNAc...) asparagine glycosylation is present at Asn-99. An Olfactomedin-like domain is found at 139 to 398 (VCPGTLKAIV…ILRYSLEFGP (260 aa)). Over residues 423 to 439 (STTSSASQRGPVSSTAA) the composition is skewed to polar residues. Residues 423 to 461 (STTSSASQRGPVSSTAAGPQDGSRGTKPPPAVSTTKIPP) form a disordered region. N-linked (GlcNAc...) asparagine glycans are attached at residues Asn-524 and Asn-735. The GAIN-B domain occupies 663-841 (TRVSMPTENI…AILMAHREIA (179 aa)). Cystine bridges form between Cys-792/Cys-823 and Cys-811/Cys-825. Residues 792–841 (CSFWNYSERTMMGYWSTQGCKLVDTNKTRTTCACSHLTNFAILMAHREIA) form a GPS region. A stachel region spans residues 829–841 (TNFAILMAHREIA). The chain crosses the membrane as a helical span at residues 856–876 (WVGIVVSLVCLAICIFTFCFF). Over 877–884 (RGLQSDRN) the chain is Cytoplasmic. The chain crosses the membrane as a helical span at residues 885-905 (TIHKNLCINLFIAEFIFLIGI). The Extracellular portion of the chain corresponds to 906 to 911 (DKTKYT). The helical transmembrane segment at 912 to 932 (IACPVFAGLLHFFFLAAFSWM) threads the bilayer. Over 933–955 (CLEGVQLYLMLVEVFESEYSRKK) the chain is Cytoplasmic. Residues 956–976 (YYYVAGYLFPATVVGVSAAID) traverse the membrane as a helical segment. Topologically, residues 977-994 (YKSYGTVQACWLHVDNYF) are extracellular. Residues 995-1015 (IWSFIGPVTFIILLNIIFLVI) traverse the membrane as a helical segment. Topologically, residues 1016-1064 (TLCKMVKHSNTLKPDSSRLENINNYRVCDGYYNTDLPGYEDNKPFIKSW) are cytoplasmic. The helical transmembrane segment at 1065 to 1085 (VLGAFALLCLLGLTWSFGLLF) threads the bilayer. Topologically, residues 1086-1090 (VNEET) are extracellular. A helical membrane pass occupies residues 1091–1111 (VVMAYLFTAFNAFQGLFIFIF). The tract at residues 1386-1430 (EADDHLQSPNRDSLYTSMPNLRDSPYPESSPDMAEDLSPSRRSEN) is disordered. Polar residues predominate over residues 1392–1404 (QSPNRDSLYTSMP). Ser-1402, Ser-1437, and Ser-1458 each carry phosphoserine.

The protein belongs to the G-protein coupled receptor 2 family. Adhesion G-protein coupled receptor (ADGR) subfamily. In terms of assembly, heterodimer of 2 chains generated by proteolytic processing; the large extracellular N-terminal fragment and the membrane-bound C-terminal fragment predominantly remain associated and non-covalently linked. Autoproteolytically processed at the GPS region of the GAIN-B domain; this cleavage modulates receptor activity. Ubiquitously expressed. In neurons, specifically localizes to dendritic domains of CA1 pyramidal neurons in the S. lacunosummoleculare.

It is found in the postsynaptic cell membrane. With respect to regulation, forms a heterodimer of 2 chains generated by proteolytic processing that remain associated through non-covalent interactions mediated by the GAIN-B domain. In the inactivated receptor, the Stachel sequence (also named stalk) is embedded in the GAIN-B domain, where it adopts a beta-strand conformation. On activation, the Stachel moves into the 7 transmembrane region and adopts a twisted hook-shaped configuration that forms contacts within the receptor, leading to coupling of a G-alpha protein, which activates signaling. The cleaved GAIN-B and N-terminal domains can then dissociate from the rest of the receptor. Its function is as follows. Orphan adhesion G-protein coupled receptor (aGPCR), which mediates synapse specificity. Ligand binding causes a conformation change that triggers signaling via guanine nucleotide-binding proteins (G proteins) and modulates the activity of downstream effectors. Following G-protein coupled receptor activation, associates with cell adhesion molecules that are expressed at the surface of adjacent cells to direct synapse specificity. Specifically mediates the establishment of perforant-path synapses on CA1-region pyramidal neurons in the hippocampus. Localizes to postsynaptic spines in excitatory synapses in the S.lacunosum-moleculare and interacts with presynaptic cell adhesion molecules, such as teneurins, promoting synapse formation. This chain is Adhesion G protein-coupled receptor L2, found in Mus musculus (Mouse).